Reading from the N-terminus, the 905-residue chain is Protein translocase subunit SecA (905 aa).

ATP is bound by residues Q86, 104–108 (GEGKT), and D499. C890, C892, C901, and H902 together coordinate Zn(2+).

This sequence belongs to the SecA family. As to quaternary structure, monomer and homodimer. Part of the essential Sec protein translocation apparatus which comprises SecA, SecYEG and auxiliary proteins SecDF-YajC and YidC. Zn(2+) serves as cofactor.

It is found in the cell inner membrane. The protein localises to the cytoplasm. It catalyses the reaction ATP + H2O + cellular proteinSide 1 = ADP + phosphate + cellular proteinSide 2.. Part of the Sec protein translocase complex. Interacts with the SecYEG preprotein conducting channel. Has a central role in coupling the hydrolysis of ATP to the transfer of proteins into and across the cell membrane, serving both as a receptor for the preprotein-SecB complex and as an ATP-driven molecular motor driving the stepwise translocation of polypeptide chains across the membrane. The chain is Protein translocase subunit SecA from Rickettsia typhi (strain ATCC VR-144 / Wilmington).